The chain runs to 1067 residues: Protein bric-a-brac 2 (1067 aa).

The disordered stretch occupies residues 30–121 (MAPPEEPKMV…PPRPLTSSEV (92 aa)). Basic and acidic residues-rich tracts occupy residues 47–62 (HLEDQNRKYSPEREVE) and 86–98 (KSPEKDVETELVK). Tyrosine 55 is modified (phosphotyrosine). Phosphoserine occurs at positions 56, 87, and 147. Residues 223-288 (VDVTLSCEGH…MYKGEINVCQ (66 aa)) form the BTB domain. Disordered stretches follow at residues 312–412 (GRGE…QSQP), 444–505 (ANQR…AAQH), and 525–563 (GAAGAGGAGSGSGSGASAPTGGTGVAGSGAGAAVGSHHD). Residues 326–335 (FDDEDEEEEL) are compositionally biased toward acidic residues. A Phosphoserine modification is found at serine 377. Residue threonine 384 is modified to Phosphothreonine. The span at 391 to 412 (GGESEISERGSSGTPGQSQSQP) shows a compositional bias: low complexity. Gly residues-rich tracts occupy residues 525–538 (GAAGAGGAGSGSGS) and 545–556 (GGTGVAGSGAGA). Residues 635–687 (FRERGPLKSWRPEAMAEAIFSVLKEGLSLSQAARKFDIPYPTFVLYANRVHNM) form the HTH psq-type domain. The H-T-H motif DNA-binding region spans 645-690 (RPEAMAEAIFSVLKEGLSLSQAARKFDIPYPTFVLYANRVHNMLGP). A DNA-binding region (a.T hook) is located at residues 697–708 (DPRPKARGRPQR). Disordered regions lie at residues 796 to 829 (QILSQQQQHQQHHQQQAHHQQQPSHHQQQSPHAQ), 860 to 879 (AKHQQQQGERRGSENLPDLS), and 891 to 967 (VMPS…PYSA). The span at 812-829 (AHHQQQPSHHQQQSPHAQ) shows a compositional bias: low complexity. A compositionally biased stretch (low complexity) spans 904-914 (AAPNSAASYAR). A compositionally biased stretch (basic and acidic residues) spans 915–933 (ELSRERERDRERERERELS). A compositionally biased stretch (low complexity) spans 934-949 (RQYGSQSRGSSSGSGS).

As to expression, leg imaginal disk at the central region of the tarsus and in eye antenna disk at the basal cylinder.

It localises to the nucleus. Probably acts as a transcriptional regulator. Required for the specification of the tarsal segment. Also involved in antenna development. This is Protein bric-a-brac 2 (bab2) from Drosophila melanogaster (Fruit fly).